The primary structure comprises 60 residues: Large ribosomal subunit protein bL32 (60 aa).

Residues 1–60 (MAVQQVKKSRSKRDIRRSHDSLTNPTLSTDKSTGELHLRHHVSPNGFYKGRKVVDTKSED) are disordered. Basic residues predominate over residues 7-16 (KKSRSKRDIR). A compositionally biased stretch (polar residues) spans 22–31 (LTNPTLSTDK).

Belongs to the bacterial ribosomal protein bL32 family.

This is Large ribosomal subunit protein bL32 from Francisella tularensis subsp. tularensis (strain SCHU S4 / Schu 4).